Here is a 467-residue protein sequence, read N- to C-terminus: Serine/threonine-protein kinase AFC1 (467 aa).

Positions 115 to 443 (YQILSKMGEG…AREALNHPFF (329 aa)) constitute a Protein kinase domain. ATP contacts are provided by residues 121 to 129 (MGEGTFGQV) and Lys-144. The Proton acceptor role is filled by Asp-240. The disordered stretch occupies residues 447–467 (REQSIPPFNPNPHPFLYNQKN).

The protein belongs to the protein kinase superfamily. CMGC Ser/Thr protein kinase family. Lammer subfamily.

The enzyme catalyses L-seryl-[protein] + ATP = O-phospho-L-seryl-[protein] + ADP + H(+). It catalyses the reaction L-threonyl-[protein] + ATP = O-phospho-L-threonyl-[protein] + ADP + H(+). The catalysed reaction is L-tyrosyl-[protein] + ATP = O-phospho-L-tyrosyl-[protein] + ADP + H(+). In terms of biological role, activator of yeast transcription factor, STE12. This chain is Serine/threonine-protein kinase AFC1 (AFC1), found in Arabidopsis thaliana (Mouse-ear cress).